Consider the following 314-residue polypeptide: Ribosomal protein uL3 glutamine methyltransferase (314 aa).

The protein belongs to the protein N5-glutamine methyltransferase family. PrmB subfamily.

The enzyme catalyses L-glutaminyl-[ribosomal protein uL3] + S-adenosyl-L-methionine = N(5)-methyl-L-glutaminyl-[ribosomal protein uL3] + S-adenosyl-L-homocysteine + H(+). Methylates large ribosomal subunit protein uL3 on a specific glutamine residue. In Vibrio cholerae serotype O1 (strain ATCC 39315 / El Tor Inaba N16961), this protein is Ribosomal protein uL3 glutamine methyltransferase.